The chain runs to 883 residues: Envelope glycoprotein B (883 aa).

The N-terminal stretch at 1–31 (MQSYIAVNIDMASLKMLICVCVAILIPSTLS) is a signal peptide. At 32–750 (QDSHGIGWNN…SGIASFLSNP (719 aa)) the chain is on the virion surface side. Disulfide bonds link cysteine 77/cysteine 535, cysteine 94/cysteine 491, cysteine 167/cysteine 229, cysteine 321/cysteine 369, and cysteine 558/cysteine 608. 2 N-linked (GlcNAc...) asparagine; by host glycosylation sites follow: asparagine 102 and asparagine 121. The segment at 134 to 140 (TWALFSR) is involved in fusion and/or binding to host membrane. An N-linked (GlcNAc...) asparagine; by host glycan is attached at asparagine 211. The involved in fusion and/or binding to host membrane stretch occupies residues 216–223 (HQTLGYRT). N-linked (GlcNAc...) asparagine; by host glycosylation is found at asparagine 262 and asparagine 360. Residues 428 to 457 (QNHLPRGRERRQAAGRRTASLQSGPQGDRI) are disordered. 3 N-linked (GlcNAc...) asparagine; by host glycosylation sites follow: asparagine 579, asparagine 635, and asparagine 649. 2 hydrophobic membrane proximal region regions span residues 694–748 (IDTV…SFLS) and 724–744 (ALGTVVMTAAAAVISTVSGIA). The chain crosses the membrane as a helical span at residues 751 to 771 (FAALAIGIAVVVSIILGLLAF). The Intravirion portion of the chain corresponds to 772–883 (KYVMNLKSNP…PSWAEESEDE (112 aa)). The interval 791-817 (PPAGTPPRPSRRYYKDEEEVEEDSDED) is disordered. Acidic residues predominate over residues 806 to 817 (DEEEVEEDSDED). Positions 868 to 871 (YPLL) match the Internalization motif motif.

Belongs to the herpesviridae glycoprotein B family. In terms of assembly, homotrimer; disulfide-linked. Binds to heparan sulfate proteoglycans. Interacts with gH/gL heterodimer. A proteolytic cleavage by host furin generates two subunits that remain linked by disulfide bonds.

It is found in the virion membrane. The protein localises to the host cell membrane. The protein resides in the host endosome membrane. It localises to the host Golgi apparatus membrane. Functionally, envelope glycoprotein that forms spikes at the surface of virion envelope. Essential for the initial attachment to heparan sulfate moieties of the host cell surface proteoglycans. Involved in fusion of viral and cellular membranes leading to virus entry into the host cell. Following initial binding to its host receptors, membrane fusion is mediated by the fusion machinery composed at least of gB and the heterodimer gH/gL. May be involved in the fusion between the virion envelope and the outer nuclear membrane during virion egress. The chain is Envelope glycoprotein B from Infectious laryngotracheitis virus (strain SA-2) (ILTV).